The primary structure comprises 400 residues: Acetate kinase (400 aa).

Asn7 is a binding site for Mg(2+). Lys14 is an ATP binding site. Arg91 is a binding site for substrate. Asp148 functions as the Proton donor/acceptor in the catalytic mechanism. Residues 208 to 212, 283 to 285, and 332 to 336 each bind ATP; these read HIGNG, DFR, and GIGEH. Residue Glu387 coordinates Mg(2+).

Belongs to the acetokinase family. As to quaternary structure, homodimer. The cofactor is Mg(2+). It depends on Mn(2+) as a cofactor.

The protein localises to the cytoplasm. It carries out the reaction acetate + ATP = acetyl phosphate + ADP. Its pathway is metabolic intermediate biosynthesis; acetyl-CoA biosynthesis; acetyl-CoA from acetate: step 1/2. Catalyzes the formation of acetyl phosphate from acetate and ATP. Can also catalyze the reverse reaction. The polypeptide is Acetate kinase (Clostridium beijerinckii (strain ATCC 51743 / NCIMB 8052) (Clostridium acetobutylicum)).